We begin with the raw amino-acid sequence, 644 residues long: Forkhead box protein O (644 aa).

Residues 39–75 are disordered; the sequence is FEPQTRARSNTWPCPRPENFVEPPDELDSTKASNQQL. At Thr49 the chain carries Phosphothreonine; by PKB/AKT1. Ser80 carries the phosphoserine modification. Positions 100–206 form a DNA-binding region, fork-head; that stretch reads WGNLSYADLI…ETSRYEKRRG (107 aa). Disordered regions lie at residues 187–210, 222–276, 329–386, 412–435, and 578–612; these read KSVR…RAKK, GLND…SPIR, QQQQ…QTLQ, SPNS…DSLN, and QQHL…NSSL. Phosphoserine; by PKB/AKT1 is present on Ser195. Polar residues-rich tracts occupy residues 226-235 and 261-270; these read ATPSPSSSVS and RASSNASSCG. Ser264 is subject to Phosphoserine; by PKB/AKT1. Ser267, Ser268, and Ser273 each carry phosphoserine. Residues 329–340 show a composition bias toward low complexity; the sequence is QQQQQQQQQQQQ. Pro residues predominate over residues 350–359; sequence SQPPPPPYQP. Residues 360–374 show a composition bias toward low complexity; that stretch reads PQLQQQQQQQPSYSL. The span at 412–421 shows a compositional bias: polar residues; it reads SPNSVTTTMS.

In terms of assembly, interacts with melt.

The protein localises to the cytoplasm. The protein resides in the nucleus. In terms of biological role, transcription factor involved in the regulation of the insulin signaling pathway. Consistently activates both the downstream target Thor\d4EBP and the feedback control target InR. Involved in negative regulation of the cell cycle, modulating cell growth and proliferation. In response to cellular stresses, such as nutrient deprivation or increased levels of reactive oxygen species, foxo is activated and inhibits growth through the action of target genes such as Thor. Foxo activated in the adult fat body can regulate lifespan in adults; an insulin peptide itself may function as one secondary messenger of insulin-regulated aging. Also regulates Lip4, homolog of human acid lipases, thereby acting as a key modulator of lipid metabolism by insulin signaling and integrates insulin responses to glucose and lipid homeostasis. In Drosophila pseudoobscura pseudoobscura (Fruit fly), this protein is Forkhead box protein O.